A 192-amino-acid chain; its full sequence is Crossover junction endodeoxyribonuclease RuvC (192 aa).

Catalysis depends on residues Asp-9, Glu-70, and Asp-143. Mg(2+)-binding residues include Asp-9, Glu-70, and Asp-143. The interval 161–192 (GASVATTGPGSSSLTPAQRAWAEAEAKARRAR) is disordered. The span at 163–176 (SVATTGPGSSSLTP) shows a compositional bias: polar residues. Residues 182 to 192 (AEAEAKARRAR) are compositionally biased toward basic and acidic residues.

It belongs to the RuvC family. In terms of assembly, homodimer which binds Holliday junction (HJ) DNA. The HJ becomes 2-fold symmetrical on binding to RuvC with unstacked arms; it has a different conformation from HJ DNA in complex with RuvA. In the full resolvosome a probable DNA-RuvA(4)-RuvB(12)-RuvC(2) complex forms which resolves the HJ. It depends on Mg(2+) as a cofactor.

The protein localises to the cytoplasm. The catalysed reaction is Endonucleolytic cleavage at a junction such as a reciprocal single-stranded crossover between two homologous DNA duplexes (Holliday junction).. In terms of biological role, the RuvA-RuvB-RuvC complex processes Holliday junction (HJ) DNA during genetic recombination and DNA repair. Endonuclease that resolves HJ intermediates. Cleaves cruciform DNA by making single-stranded nicks across the HJ at symmetrical positions within the homologous arms, yielding a 5'-phosphate and a 3'-hydroxyl group; requires a central core of homology in the junction. The consensus cleavage sequence is 5'-(A/T)TT(C/G)-3'. Cleavage occurs on the 3'-side of the TT dinucleotide at the point of strand exchange. HJ branch migration catalyzed by RuvA-RuvB allows RuvC to scan DNA until it finds its consensus sequence, where it cleaves and resolves the cruciform DNA. The chain is Crossover junction endodeoxyribonuclease RuvC from Pseudarthrobacter chlorophenolicus (strain ATCC 700700 / DSM 12829 / CIP 107037 / JCM 12360 / KCTC 9906 / NCIMB 13794 / A6) (Arthrobacter chlorophenolicus).